The primary structure comprises 368 residues: Glycolate oxidase 2 (368 aa).

Positions 1–360 (MALVTNVCEY…TRGHVVTESD (360 aa)) constitute an FMN hydroxy acid dehydrogenase domain. FMN contacts are provided by residues 78-80 (PTA), serine 107, 128-130 (QLS), and threonine 156. Arginine 165 contributes to the glyoxylate binding site. Residues lysine 231 and serine 253 each coordinate FMN. Glyoxylate-binding residues include histidine 255 and arginine 258. Histidine 255 acts as the Proton acceptor in catalysis. Residues 286–290 (DSGFR) and 309–310 (GR) each bind FMN. Positions 366-368 (SRL) match the Microbody targeting signal motif.

It belongs to the FMN-dependent alpha-hydroxy acid dehydrogenase family. Homotetramer. The cofactor is FMN.

The protein localises to the peroxisome. The enzyme catalyses glycolate + O2 = glyoxylate + H2O2. It functions in the pathway photosynthesis; photorespiration; glycine from 2-phosphoglycolate: step 2/3. Functionally, catalyzes the oxidation of glycolate to glyoxylate, with a reduction of O2 to H2O2. Is a key enzyme in photorespiration in green plants. This Oryza sativa subsp. indica (Rice) protein is Glycolate oxidase 2 (GLO2).